The sequence spans 221 residues: UPF0502 protein Sputcn32_1644 (221 aa).

It belongs to the UPF0502 family.

The protein is UPF0502 protein Sputcn32_1644 of Shewanella putrefaciens (strain CN-32 / ATCC BAA-453).